The sequence spans 178 residues: Large ribosomal subunit protein uL6 (178 aa).

Belongs to the universal ribosomal protein uL6 family. As to quaternary structure, part of the 50S ribosomal subunit.

Functionally, this protein binds to the 23S rRNA, and is important in its secondary structure. It is located near the subunit interface in the base of the L7/L12 stalk, and near the tRNA binding site of the peptidyltransferase center. The polypeptide is Large ribosomal subunit protein uL6 (Maridesulfovibrio salexigens (strain ATCC 14822 / DSM 2638 / NCIMB 8403 / VKM B-1763) (Desulfovibrio salexigens)).